We begin with the raw amino-acid sequence, 352 residues long: Septin-2B (352 aa).

A Septin-type G domain is found at 33 to 305 (KGFEFTLMVV…ENFRSERLKK (273 aa)). The interval 43–50 (GESGLGKS) is G1 motif. GTP contacts are provided by residues 43–50 (GESGLGKS), Thr77, Gly103, 182–190 (KADTLTLRE), Gly240, and Arg255. Residues 100–103 (DTPG) are G3 motif. The segment at 181–184 (AKAD) is G4 motif. The tract at residues 259–269 (WGVVEVENPEH) is important for dimerization.

Belongs to the TRAFAC class TrmE-Era-EngA-EngB-Septin-like GTPase superfamily. Septin GTPase family. As to quaternary structure, septins polymerize into heterooligomeric protein complexes that form filaments, and associate with cellular membranes, actin filaments and microtubules. GTPase activity is required for filament formation. Can form heterooligomers with other family members and form filaments. Interacts with wdpcp.

It is found in the cytoplasm. Its subcellular location is the cytoskeleton. The protein resides in the spindle. The protein localises to the cleavage furrow. It localises to the midbody. It is found in the cell projection. Its subcellular location is the cilium membrane. In terms of biological role, filament-forming cytoskeletal GTPase. Required for normal organization of the actin cytoskeleton. Plays a role in the biogenesis of polarized columnar-shaped epithelium. Required for the progression through mitosis through regulation of chromosome congression. During anaphase, may be required for chromosome segregation and spindle elongation. Probably plays a role in ciliogenesis and collective cell movements including convergent extension during gastrulation. In cilia, required for the integrity of the diffusion barrier at the base of the primary cilium that prevents diffusion of transmembrane proteins between the cilia and plasma membranes. Controls cell shape and not polarization of cells during convergent extension. The sequence is that of Septin-2B (sept2-b) from Xenopus laevis (African clawed frog).